A 470-amino-acid polypeptide reads, in one-letter code: Dihydrolipoyl dehydrogenase (470 aa).

Residues 39–47 (EKGNLGGVC), Lys-56, and Ala-119 each bind FAD. A disulfide bridge connects residues Cys-47 and Cys-52. Residues 183-187 (GGGYI), Glu-206, and 271-274 (TVGR) each bind NAD(+). FAD contacts are provided by Asp-314 and Ala-322. The active-site Proton acceptor is His-446.

This sequence belongs to the class-I pyridine nucleotide-disulfide oxidoreductase family. In terms of assembly, homodimer. Identified in a complex with PdhC. Requires FAD as cofactor.

Its subcellular location is the cytoplasm. The catalysed reaction is N(6)-[(R)-dihydrolipoyl]-L-lysyl-[protein] + NAD(+) = N(6)-[(R)-lipoyl]-L-lysyl-[protein] + NADH + H(+). In terms of biological role, lipoamide dehydrogenase is a component of the alpha-ketoacid dehydrogenase complexes. The sequence is that of Dihydrolipoyl dehydrogenase (pdhD) from Geobacillus stearothermophilus (Bacillus stearothermophilus).